A 371-amino-acid polypeptide reads, in one-letter code: MSSELLDALTILEKEKGISKEIIIEAIEAALISAYKRNFNQAQNVRVDLNRETGSIRVFARKDVVDEVYDQRLEISIEEAQGIHPEYMVGDVVEIEVTPKDFGRIAAQTAKQVVTQRVREAERGVIYSEFIDREEDIMTGIVQRLDNKFIYVSLGKIEALLPVNEQMPNESYKPHDRIKVYITKVEKTTKGPQIYVSRTHPGLLKRLFEIEVPEIYDGTVELKSVAREAGDRSKISVRTDDPDVDPVGSCVGPKGQRVQAIVNELKGEKIDIVNWSSDPVEFVANALSPSKVLDVIVNEEEKATTVIVPDYQLSLAIGKRGQNARLAAKLTGWKIDIKSETDARELGIYPRELEEDDEPLFTEPETAESDE.

In terms of domain architecture, S1 motif spans 135–199 (EDIMTGIVQR…KGPQIYVSRT (65 aa)). The 67-residue stretch at 301-367 (EKATTVIVPD…EPLFTEPETA (67 aa)) folds into the KH domain. Residues 347–371 (GIYPRELEEDDEPLFTEPETAESDE) are disordered. A compositionally biased stretch (acidic residues) spans 353–371 (LEEDDEPLFTEPETAESDE).

The protein belongs to the NusA family. Monomer. Binds directly to the core enzyme of the DNA-dependent RNA polymerase and to nascent RNA.

It is found in the cytoplasm. In terms of biological role, participates in both transcription termination and antitermination. This chain is Transcription termination/antitermination protein NusA, found in Bacillus subtilis (strain 168).